The sequence spans 396 residues: MQNMVILGATGSIGASTLSVISANPDAYRVYALVANASVDKMLALCVTHRPQVAHMVDSQAALALQAKLPPELNIQVTSGEDELIALVTATEVDTVMAAIVGAAGLVPTLAAVKAGKRVLLANKEALVMSGELFIEATKASGATLLPVDSEHNAIFQCLPEEVQANLGRCDLAASGISHILLTGSGGPFLTAELASLASMTPAQACKHPNWSMGPKISVDSATMMNKGLEFIEARWLFNTQKDQLKVVIHPQSVIHSMVQYRDGSVIAQMGNPDMRTPIAHCMSYPQRIRSGVEPLDFFKVGQLSFCEPDFNRFPCLALAIAACAQGQEATTVLNAANEIAVEAFLQGQIGFTHIAKVNEACLSSVPKRAMTSIDDIIALDAQTRIYAREQLAKFA.

Positions 10, 11, 12, 13, and 123 each coordinate NADPH. Lysine 124 serves as a coordination point for 1-deoxy-D-xylulose 5-phosphate. Glutamate 125 is an NADPH binding site. Mn(2+) is bound at residue aspartate 149. 1-deoxy-D-xylulose 5-phosphate contacts are provided by serine 150, glutamate 151, serine 185, and histidine 208. Position 151 (glutamate 151) interacts with Mn(2+). Glycine 214 is an NADPH binding site. Residues serine 221, asparagine 226, lysine 227, and glutamate 230 each contribute to the 1-deoxy-D-xylulose 5-phosphate site. Glutamate 230 is a binding site for Mn(2+).

It belongs to the DXR family. Requires Mg(2+) as cofactor. The cofactor is Mn(2+).

It carries out the reaction 2-C-methyl-D-erythritol 4-phosphate + NADP(+) = 1-deoxy-D-xylulose 5-phosphate + NADPH + H(+). Its pathway is isoprenoid biosynthesis; isopentenyl diphosphate biosynthesis via DXP pathway; isopentenyl diphosphate from 1-deoxy-D-xylulose 5-phosphate: step 1/6. In terms of biological role, catalyzes the NADPH-dependent rearrangement and reduction of 1-deoxy-D-xylulose-5-phosphate (DXP) to 2-C-methyl-D-erythritol 4-phosphate (MEP). The sequence is that of 1-deoxy-D-xylulose 5-phosphate reductoisomerase from Shewanella sp. (strain ANA-3).